The chain runs to 65 residues: Hirudin-3A (65 aa).

Residues 1–3 (VVY) form an interaction with thrombin active site region. 3 disulfide bridges follow: cysteine 6–cysteine 14, cysteine 16–cysteine 28, and cysteine 22–cysteine 39. Residues 39-65 (CVTGEGTPKPQSHNDGDFEEIPEEYLQ) are disordered. The O-linked (GalNAc...) threonine glycan is linked to threonine 45. Residues 55-65 (DFEEIPEEYLQ) form an interaction with fibrinogen-binding exosite of thrombin region. Over residues 55–65 (DFEEIPEEYLQ) the composition is skewed to acidic residues. Tyrosine 63 carries the sulfotyrosine modification.

Belongs to the protease inhibitor I14 (hirudin) family.

The protein resides in the secreted. Functionally, hirudin is a potent thrombin-specific protease inhibitor. It forms a stable non-covalent complex with alpha-thrombin, thereby abolishing its ability to cleave fibrinogen. This Hirudo medicinalis (Medicinal leech) protein is Hirudin-3A.